The following is a 495-amino-acid chain: Probable cytosol aminopeptidase (495 aa).

Positions 267 and 272 each coordinate Mn(2+). Lysine 279 is a catalytic residue. 3 residues coordinate Mn(2+): aspartate 290, aspartate 349, and glutamate 351. Arginine 353 is a catalytic residue.

The protein belongs to the peptidase M17 family. Requires Mn(2+) as cofactor.

Its subcellular location is the cytoplasm. It carries out the reaction Release of an N-terminal amino acid, Xaa-|-Yaa-, in which Xaa is preferably Leu, but may be other amino acids including Pro although not Arg or Lys, and Yaa may be Pro. Amino acid amides and methyl esters are also readily hydrolyzed, but rates on arylamides are exceedingly low.. The catalysed reaction is Release of an N-terminal amino acid, preferentially leucine, but not glutamic or aspartic acids.. Functionally, presumably involved in the processing and regular turnover of intracellular proteins. Catalyzes the removal of unsubstituted N-terminal amino acids from various peptides. This is Probable cytosol aminopeptidase from Histophilus somni (strain 2336) (Haemophilus somnus).